Reading from the N-terminus, the 331-residue chain is Nucleoporin Nup35 (331 aa).

Disordered stretches follow at residues 1-63 and 79-110; these read MEPM…HELN and AHTA…GLFD. Polar residues-rich tracts occupy residues 8–20, 35–56, and 84–104; these read SPVN…QTQY, HKNT…SPGG, and GANS…TGPP. One can recognise an RRM Nup35-type domain in the interval 187–268; sequence RLSDFWVTIF…SRCTDRSVID (82 aa).

It belongs to the Nup35 family. Interacts with Nup154.

It localises to the nucleus. Its subcellular location is the nuclear pore complex. Functionally, functions as a component of the nuclear pore complex (NPC). May have a role in the organization of the inner nuclear membrane proteins at the nuclear envelope together with Nup154. The chain is Nucleoporin Nup35 from Drosophila melanogaster (Fruit fly).